A 435-amino-acid chain; its full sequence is Nuclear distribution protein nudF 2 (435 aa).

The 33-residue stretch at 9–41 (QAEELHKSIIAYLSANGLPETTAILRKELGVTE) folds into the LisH domain. WD repeat units lie at residues 86–125 (SHRDTINCIAFHPKYSSIASGSDDCTIKIWDWELGELEVT), 128–171 (GHTR…KNIR), 175–214 (GHDHIVSAVRFIPNGSLLASASRDMDVRLWDVTNGYCVKT), 217–256 (GHTGWVRDVCASLDGRFILSTGDDMTVRLWDISAKPENKL), 280–320 (APLA…LMTL), 322–361 (GHDNWVRAIVFHPGGRYLLSVSDDKTLRCWDLSQEGKCVK), 366–396 (THGGFITCLRWAPAILKDTPTDAARALVRQI), and 397–434 (PDVAEIMKNATFEESFSDVQIRCVVATGSVDKKLQIFA).

This sequence belongs to the WD repeat LIS1/nudF family. Self-associates. Interacts with nudE and dynein.

It localises to the cytoplasm. It is found in the cytoskeleton. Its subcellular location is the spindle pole. Positively regulates the activity of the minus-end directed microtubule motor protein dynein. May enhance dynein-mediated microtubule sliding by targeting dynein to the microtubule plus end. Required for nuclear migration during vegetative growth as well as development. Required for retrograde early endosome (EE) transport from the hyphal tip. Required for localization of dynein to the mitotic spindle poles. Recruits additional proteins to the dynein complex at SPBs. In Aspergillus clavatus (strain ATCC 1007 / CBS 513.65 / DSM 816 / NCTC 3887 / NRRL 1 / QM 1276 / 107), this protein is Nuclear distribution protein nudF 2.